Reading from the N-terminus, the 236-residue chain is 2,3,4,5-tetrahydropyridine-2,6-dicarboxylate N-acetyltransferase (236 aa).

It belongs to the transferase hexapeptide repeat family. DapH subfamily.

It catalyses the reaction (S)-2,3,4,5-tetrahydrodipicolinate + acetyl-CoA + H2O = L-2-acetamido-6-oxoheptanedioate + CoA. It participates in amino-acid biosynthesis; L-lysine biosynthesis via DAP pathway; LL-2,6-diaminopimelate from (S)-tetrahydrodipicolinate (acetylase route): step 1/3. In terms of biological role, catalyzes the transfer of an acetyl group from acetyl-CoA to tetrahydrodipicolinate. The sequence is that of 2,3,4,5-tetrahydropyridine-2,6-dicarboxylate N-acetyltransferase from Bacillus subtilis (strain 168).